Here is a 123-residue protein sequence, read N- to C-terminus: Large ribosomal subunit protein bL12 (123 aa).

The protein belongs to the bacterial ribosomal protein bL12 family. In terms of assembly, homodimer. Part of the ribosomal stalk of the 50S ribosomal subunit. Forms a multimeric L10(L12)X complex, where L10 forms an elongated spine to which 2 to 4 L12 dimers bind in a sequential fashion. Binds GTP-bound translation factors.

Functionally, forms part of the ribosomal stalk which helps the ribosome interact with GTP-bound translation factors. Is thus essential for accurate translation. The chain is Large ribosomal subunit protein bL12 from Chlorobium luteolum (strain DSM 273 / BCRC 81028 / 2530) (Pelodictyon luteolum).